The following is a 270-amino-acid chain: Allergen Asp f 7 (270 aa).

Residues 1–21 (MAPIFKSLALVSALFAAISSA) form the signal peptide. Disordered regions lie at residues 53-97 (YPTP…QPTQ) and 113-167 (ADSA…GPCS). Over residues 63-81 (VVESTPTPTPSAAPEQAEP) the composition is skewed to low complexity. The span at 83–97 (ETSTQPETTKSQPTQ) shows a compositional bias: polar residues. A compositionally biased stretch (low complexity) spans 127–149 (PATTAAPSTSTTTQAAPSAPPAA). A compositionally biased stretch (polar residues) spans 150-162 (NSGSTEKAASSGY).

In Aspergillus fumigatus (strain ATCC MYA-4609 / CBS 101355 / FGSC A1100 / Af293) (Neosartorya fumigata), this protein is Allergen Asp f 7.